Reading from the N-terminus, the 234-residue chain is Ubiquitin domain-containing protein 1 (234 aa).

The interval 1 to 47 (MGGCVGTHHDSSGSLNENSDGTGVALGRNQPLKKDKPKWKSDYPMTD) is disordered. The segment covering 12-21 (SGSLNENSDG) has biased composition (polar residues). Residues 32-41 (LKKDKPKWKS) are compositionally biased toward basic and acidic residues. Residues 152–227 (CQLRLRLSTG…VQVIVSQPIP (76 aa)) form the Ubiquitin-like domain.

Its function is as follows. May be involved in the regulation of cellular senescence through a positive feedback loop with TP53. The protein is Ubiquitin domain-containing protein 1 (ubtd1) of Xenopus laevis (African clawed frog).